Here is a 274-residue protein sequence, read N- to C-terminus: MSIFIPKARRPTFELHLRIHDVVNIPLITGVIFVKWNIEGIHSRHANDQTEAEPVLEHRVTWEYETCVSVRMIIDNDNLLKDKFLILQVLCDSHTDSGVIRLGILKINLTEYVYVGQDTRKYLLADSKINATIRIGISLKQTSGNKDFRVSKTLGKPQVFSGLTGLLTDGKELKRRDDEVYTSTGLASAWAEKMLHSIKDFNQKTTVFHMHTRNNKYDTREIVDDIFFGGTGWAEPPKIADIVDAAGDTDLISLEIRQKSWVLPSEKVLNKRLP.

The C2 NT-type domain occupies 3–141 (IFIPKARRPT…TIRIGISLKQ (139 aa)).

This sequence to yeast YBL086c.

This is an uncharacterized protein from Schizosaccharomyces pombe (strain 972 / ATCC 24843) (Fission yeast).